Here is a 156-residue protein sequence, read N- to C-terminus: Ribosomal RNA large subunit methyltransferase H (156 aa).

The S-adenosyl-L-methionine site is built by leucine 72 and glycine 104.

It belongs to the RNA methyltransferase RlmH family. In terms of assembly, homodimer.

Its subcellular location is the cytoplasm. It carries out the reaction pseudouridine(1915) in 23S rRNA + S-adenosyl-L-methionine = N(3)-methylpseudouridine(1915) in 23S rRNA + S-adenosyl-L-homocysteine + H(+). Functionally, specifically methylates the pseudouridine at position 1915 (m3Psi1915) in 23S rRNA. The chain is Ribosomal RNA large subunit methyltransferase H from Maricaulis maris (strain MCS10) (Caulobacter maris).